The chain runs to 250 residues: ATP synthase subunit a (250 aa).

6 helical membrane-spanning segments follow: residues 25 to 45 (VSFT…FFFL), 84 to 104 (VFFP…VIGL), 115 to 135 (IVVT…YGFY), 141 to 161 (FLHL…IVLI), 187 to 209 (ALKV…WLGA), and 223 to 243 (ELLV…IYLN).

The protein belongs to the ATPase A chain family. In terms of assembly, F-type ATPases have 2 components, CF(1) - the catalytic core - and CF(0) - the membrane proton channel. CF(1) has five subunits: alpha(3), beta(3), gamma(1), delta(1), epsilon(1). CF(0) has three main subunits: a(1), b(2) and c(9-12). The alpha and beta chains form an alternating ring which encloses part of the gamma chain. CF(1) is attached to CF(0) by a central stalk formed by the gamma and epsilon chains, while a peripheral stalk is formed by the delta and b chains.

The protein resides in the cell inner membrane. Key component of the proton channel; it plays a direct role in the translocation of protons across the membrane. This chain is ATP synthase subunit a, found in Azorhizobium caulinodans (strain ATCC 43989 / DSM 5975 / JCM 20966 / LMG 6465 / NBRC 14845 / NCIMB 13405 / ORS 571).